The following is a 498-amino-acid chain: Glycerol kinase (498 aa).

Thr-11 is a binding site for ADP. ATP-binding residues include Thr-11, Ser-12, and Ser-13. Thr-11 lines the sn-glycerol 3-phosphate pocket. Arg-15 is a binding site for ADP. Sn-glycerol 3-phosphate-binding residues include Arg-81, Glu-82, Tyr-133, and Asp-242. 5 residues coordinate glycerol: Arg-81, Glu-82, Tyr-133, Asp-242, and Gln-243. Positions 264 and 307 each coordinate ADP. The ATP site is built by Thr-264, Gly-307, Gln-311, and Gly-412. Residues Gly-412 and Asn-416 each coordinate ADP.

The protein belongs to the FGGY kinase family.

It catalyses the reaction glycerol + ATP = sn-glycerol 3-phosphate + ADP + H(+). Its pathway is polyol metabolism; glycerol degradation via glycerol kinase pathway; sn-glycerol 3-phosphate from glycerol: step 1/1. Its activity is regulated as follows. Inhibited by fructose 1,6-bisphosphate (FBP). Key enzyme in the regulation of glycerol uptake and metabolism. Catalyzes the phosphorylation of glycerol to yield sn-glycerol 3-phosphate. This Delftia acidovorans (strain DSM 14801 / SPH-1) protein is Glycerol kinase.